The following is a 649-amino-acid chain: MEKQGCEIEALDIDYNIFVRKINVNPFGIFRRKPRPEADQPVKTEEESLKLEDETGNKVKHVLKGVTCRAKPWEILAIVGPSGAGKSSLLEILAARLIPQTGSVYVNKRPVDRANFKKISGYVTQKDTLFPLLTVEETLLFSAKLRLKLPADELRSRVKSLVHELGLEAVATARVGDDSVRGISGGERRRVSIGVEVIHDPKVLILDEPTSGLDSTSALLIIDMLKHMAETRGRTIILTIHQPGFRIVKQFNSVLLLANGSTLKQGSVDQLGVYLRSNGLHPPLHENIVEFAIESIESITKQQRLQESRRAAHVLTPQTTLQEKRSEDSQGESKSGKFTLQQLFQQTRVADVGTMNIATEFTRDFANSRLEETMILTHRFSKNIFRTKELFACRTVQMLGSGIVLGLIFHNLKDDLKGARERVGLFAFILTFLLTSTIEALPIFLQEREILMKETSSGSYRVSSYAVANGLVYLPFLLILAILFSTPVYWLVGLNPSFMAFLHFSLLIWLILYTANSVVVCFSALVPNFIVGNSVISGVMGSFFLFSGYFISNHEIPGYWIFMHYISLFKYPFEGFLINEFSKSNKCLEYGFGKCLVTEEDLLKEERYGEESRWRNVVIMLCFVLLYRFISYVILRCRCSQRSFKTTLA.

In terms of domain architecture, ABC transporter spans 42–284 (VKTEEESLKL…LRSNGLHPPL (243 aa)). 80–87 (GPSGAGKS) is a binding site for ATP. Positions 308-336 (SRRAAHVLTPQTTLQEKRSEDSQGESKSG) are disordered. Residues 371–581 (EETMILTHRF…PFEGFLINEF (211 aa)) enclose the ABC transmembrane type-2 domain. 6 consecutive transmembrane segments (helical) span residues 390–410 (LFAC…LIFH), 425–445 (LFAF…PIFL), 474–494 (LPFL…LVGL), 506–526 (LLIW…SALV), 529–549 (FIVG…FSGY), and 617–637 (VVIM…ILRC).

This sequence belongs to the ABC transporter superfamily. ABCG family. Eye pigment precursor importer (TC 3.A.1.204) subfamily.

The protein resides in the membrane. The protein is ABC transporter G family member 5 (ABCG5) of Arabidopsis thaliana (Mouse-ear cress).